The primary structure comprises 790 residues: MASLRSATPRLRSYFRDKYIPQICEALLCGLLVTCPEDPLKYLEHMILAIIKRGLENLLWDTCIHPSLKSRVRRLSETYLDELFGLDDQLVTPELMIKACTFYTGHLVKTHFSGWKKVAIPRANQEEIMAEKMDKAIAHDNFRCQKYIFNRWFAYTVMSRERLITTLLRLRHLFYMQRQRIILAKWKERARHKSKTREDDLISKHELQLKKWKFKLGKPISLEGSLSDIAVENRRIAFDISVLPEQAILQIFLYLTFKDMMACSRVNRSWMAMIQRGSLWNSIDFSTVKNIADKCVVTTLQKWRLNVLRLNFRGCDFRTKTLKAVSHCKNLQELNVSDCQSFTDESMRHISEGCPGVLYLNLSNTTITNRTMRLLPRYFHNLQNLSLAYCRKFTDKGLQYLNLGNGCHKLIYLDLSGCTQVLVEKCPRISSVVLIGSPHISDSAFKALSSCDLKKIRFEGNKRISDACFKSIDRNYPGINHIYMVDCKGLTDSSLKSLSLLKQLTVLNLTNCIRIGDIGLKHFFDGPASIRLRELNLTNCSLLGDSSVIRLSERCPNLHYLNLRNCEHLTDLAIEYIASMLSLISVDLSGTLISNEGMTILSRHRKLREVSVSDCVNITDFGIRAYCKTSLLLEHLDVSYCSQLTDDIIKTIAIFCTRITSLNIAGCPKITDAGMEILSARCHYLHILDISGCIQLTDQIIQDLQIGCKQLRILKMQFCKSISPAAAQKMSSVVQHQEYNSDNPPHWFGYDSEGNPLDKIHSRVQLRTYSKLIVKEPFSIDEEDPDSKHQ.

The F-box domain maps to 237-283; that stretch reads AFDISVLPEQAILQIFLYLTFKDMMACSRVNRSWMAMIQRGSLWNSI. LRR repeat units follow at residues 503–525, 531–552, 557–579, 582–602, 606–628, and 632–657; these read QLTV…HFFD, RLRE…IRLS, NLHY…YIAS, SLIS…TILS, KLRE…AYCK, and LLEH…IFCT.

This sequence belongs to the DRC6 family. As to quaternary structure, component of the nexin-dynein regulatory complex (N-DRC). Directly interacts with SKP1 and CUL1. Interacts with TCTE1/DRC5.

The protein localises to the cytoplasm. It is found in the cytoskeleton. Its subcellular location is the flagellum axoneme. It localises to the microtubule organizing center. The protein resides in the centrosome. In terms of biological role, substrate-recognition component of the SCF (SKP1-CUL1-F-box protein)-type E3 ubiquitin ligase complex. Component of the nexin-dynein regulatory complex (N-DRC), a key regulator of ciliary/flagellar motility which maintains the alignment and integrity of the distal axoneme and regulates microtubule sliding in motile axonemes. Specifically targets CEP192 isoform 3 for ubiquitin-mediated proteolysis and thereby acts as a regulator of microtubule nucleation activity. The sequence is that of F-box and leucine-rich repeat protein 13 (Fbxl13) from Mus musculus (Mouse).